A 459-amino-acid polypeptide reads, in one-letter code: Bifunctional protein GlmU (459 aa).

The pyrophosphorylase stretch occupies residues 1-230; it reads MVKRYAVILA…FEETIGVNDR (230 aa). Residues 9-12, K23, Q73, and 78-79 contribute to the UDP-N-acetyl-alpha-D-glucosamine site; these read LAAG and GT. D103 is a Mg(2+) binding site. G140, E155, N170, and N228 together coordinate UDP-N-acetyl-alpha-D-glucosamine. A Mg(2+)-binding site is contributed by N228. Positions 231–251 are linker; that stretch reads VALAEAEKIMRERICRKHMMN. An N-acetyltransferase region spans residues 252–459; it reads GVTIIDPAHT…VDRLSIKKNS (208 aa). The UDP-N-acetyl-alpha-D-glucosamine site is built by R333 and K351. H363 (proton acceptor) is an active-site residue. The UDP-N-acetyl-alpha-D-glucosamine site is built by Y366 and N377. Residues 386–387, A423, and R440 each bind acetyl-CoA; that span reads NY.

It in the N-terminal section; belongs to the N-acetylglucosamine-1-phosphate uridyltransferase family. The protein in the C-terminal section; belongs to the transferase hexapeptide repeat family. Homotrimer. Mg(2+) serves as cofactor.

The protein resides in the cytoplasm. It catalyses the reaction alpha-D-glucosamine 1-phosphate + acetyl-CoA = N-acetyl-alpha-D-glucosamine 1-phosphate + CoA + H(+). The catalysed reaction is N-acetyl-alpha-D-glucosamine 1-phosphate + UTP + H(+) = UDP-N-acetyl-alpha-D-glucosamine + diphosphate. The protein operates within nucleotide-sugar biosynthesis; UDP-N-acetyl-alpha-D-glucosamine biosynthesis; N-acetyl-alpha-D-glucosamine 1-phosphate from alpha-D-glucosamine 6-phosphate (route II): step 2/2. Its pathway is nucleotide-sugar biosynthesis; UDP-N-acetyl-alpha-D-glucosamine biosynthesis; UDP-N-acetyl-alpha-D-glucosamine from N-acetyl-alpha-D-glucosamine 1-phosphate: step 1/1. It participates in bacterial outer membrane biogenesis; LPS lipid A biosynthesis. Its function is as follows. Catalyzes the last two sequential reactions in the de novo biosynthetic pathway for UDP-N-acetylglucosamine (UDP-GlcNAc). The C-terminal domain catalyzes the transfer of acetyl group from acetyl coenzyme A to glucosamine-1-phosphate (GlcN-1-P) to produce N-acetylglucosamine-1-phosphate (GlcNAc-1-P), which is converted into UDP-GlcNAc by the transfer of uridine 5-monophosphate (from uridine 5-triphosphate), a reaction catalyzed by the N-terminal domain. The sequence is that of Bifunctional protein GlmU from Geobacillus sp. (strain WCH70).